The sequence spans 81 residues: Acyl carrier protein (81 aa).

Residues 4-79 form the Carrier domain; that stretch reads DEVYSRVRKI…DAVNYILSKK (76 aa). The residue at position 39 (Ser39) is an O-(pantetheine 4'-phosphoryl)serine.

It belongs to the acyl carrier protein (ACP) family. In terms of processing, 4'-phosphopantetheine is transferred from CoA to a specific serine of apo-ACP by AcpS. This modification is essential for activity because fatty acids are bound in thioester linkage to the sulfhydryl of the prosthetic group.

It is found in the cytoplasm. Its pathway is lipid metabolism; fatty acid biosynthesis. In terms of biological role, carrier of the growing fatty acid chain in fatty acid biosynthesis. The chain is Acyl carrier protein from Synechococcus sp. (strain JA-3-3Ab) (Cyanobacteria bacterium Yellowstone A-Prime).